We begin with the raw amino-acid sequence, 884 residues long: Alanine--tRNA ligase (884 aa).

The Zn(2+) site is built by His562, His566, Cys674, and His678.

Belongs to the class-II aminoacyl-tRNA synthetase family. The cofactor is Zn(2+).

It is found in the cytoplasm. The enzyme catalyses tRNA(Ala) + L-alanine + ATP = L-alanyl-tRNA(Ala) + AMP + diphosphate. Its function is as follows. Catalyzes the attachment of alanine to tRNA(Ala) in a two-step reaction: alanine is first activated by ATP to form Ala-AMP and then transferred to the acceptor end of tRNA(Ala). Also edits incorrectly charged Ser-tRNA(Ala) and Gly-tRNA(Ala) via its editing domain. This Rhizobium etli (strain ATCC 51251 / DSM 11541 / JCM 21823 / NBRC 15573 / CFN 42) protein is Alanine--tRNA ligase.